Reading from the N-terminus, the 621-residue chain is 1-deoxy-D-xylulose-5-phosphate synthase (621 aa).

Thiamine diphosphate-binding positions include H80 and G121–S123. D152 provides a ligand contact to Mg(2+). Thiamine diphosphate-binding positions include G153–A154, N181, Y288, and E370. N181 provides a ligand contact to Mg(2+).

It belongs to the transketolase family. DXPS subfamily. Homodimer. Requires Mg(2+) as cofactor. Thiamine diphosphate is required as a cofactor.

The catalysed reaction is D-glyceraldehyde 3-phosphate + pyruvate + H(+) = 1-deoxy-D-xylulose 5-phosphate + CO2. Its pathway is metabolic intermediate biosynthesis; 1-deoxy-D-xylulose 5-phosphate biosynthesis; 1-deoxy-D-xylulose 5-phosphate from D-glyceraldehyde 3-phosphate and pyruvate: step 1/1. Catalyzes the acyloin condensation reaction between C atoms 2 and 3 of pyruvate and glyceraldehyde 3-phosphate to yield 1-deoxy-D-xylulose-5-phosphate (DXP). The sequence is that of 1-deoxy-D-xylulose-5-phosphate synthase from Shewanella sediminis (strain HAW-EB3).